Reading from the N-terminus, the 342-residue chain is Tetraacyldisaccharide 4'-kinase (342 aa).

Threonine 68 to threonine 75 contacts ATP.

Belongs to the LpxK family.

It catalyses the reaction a lipid A disaccharide + ATP = a lipid IVA + ADP + H(+). It functions in the pathway glycolipid biosynthesis; lipid IV(A) biosynthesis; lipid IV(A) from (3R)-3-hydroxytetradecanoyl-[acyl-carrier-protein] and UDP-N-acetyl-alpha-D-glucosamine: step 6/6. Transfers the gamma-phosphate of ATP to the 4'-position of a tetraacyldisaccharide 1-phosphate intermediate (termed DS-1-P) to form tetraacyldisaccharide 1,4'-bis-phosphate (lipid IVA). In Burkholderia vietnamiensis (strain G4 / LMG 22486) (Burkholderia cepacia (strain R1808)), this protein is Tetraacyldisaccharide 4'-kinase.